The following is a 290-amino-acid chain: Glycine--tRNA ligase alpha subunit (290 aa).

Belongs to the class-II aminoacyl-tRNA synthetase family. Tetramer of two alpha and two beta subunits.

It localises to the cytoplasm. The enzyme catalyses tRNA(Gly) + glycine + ATP = glycyl-tRNA(Gly) + AMP + diphosphate. The chain is Glycine--tRNA ligase alpha subunit from Syntrophotalea carbinolica (strain DSM 2380 / NBRC 103641 / GraBd1) (Pelobacter carbinolicus).